The following is a 349-amino-acid chain: Small ribosomal subunit protein uS2 (349 aa).

Belongs to the universal ribosomal protein uS2 family.

This Methylobacterium nodulans (strain LMG 21967 / CNCM I-2342 / ORS 2060) protein is Small ribosomal subunit protein uS2.